A 494-amino-acid chain; its full sequence is MAAPAATDQAWEAVIGLETHVQLGTNSKIFTAASTAFGDDPNTHIDPVVCGLPGTLPVLNQKVLEYAVKAAMALNLNIAEHSKFDRKQYFYPDLPKNYQISQYDEPIAEDGWIEVEVAEKGKDTYLKTIGIERLHMEEDAGKLVHAGSDRLAGSTHSLVDYNRAGVALAEIVSKPDLRTGREAAEYASEIRRIMRYLGVSDGNMQEGSLRCDVNISVRRGPEAPFGTKVEIKNMNSFSAIQKACEYEIQRQIKAYEAGEPIVQETRLWDESKQLTKSMRSKEGASDYRYFPDPDLGPIEVSADQRDSWRAELPELPAAKRHRYADTLGLSQYDARVLTDEKPMADYFEAVVVAGADAKLAANWITGDIAAYVNSNRLSYANLPFRPEQLAEMVQLIDGGKISGKIAKEILPELLENGGSPKAIVDERGLGMISDPAAIEAIVDELLGAHPDEVEAFRGGKTKLQGFFVGQLMKKTGGKADPKLANQILSKKLKG.

This sequence belongs to the GatB/GatE family. GatB subfamily. Heterotrimer of A, B and C subunits.

It catalyses the reaction L-glutamyl-tRNA(Gln) + L-glutamine + ATP + H2O = L-glutaminyl-tRNA(Gln) + L-glutamate + ADP + phosphate + H(+). The enzyme catalyses L-aspartyl-tRNA(Asn) + L-glutamine + ATP + H2O = L-asparaginyl-tRNA(Asn) + L-glutamate + ADP + phosphate + 2 H(+). Allows the formation of correctly charged Asn-tRNA(Asn) or Gln-tRNA(Gln) through the transamidation of misacylated Asp-tRNA(Asn) or Glu-tRNA(Gln) in organisms which lack either or both of asparaginyl-tRNA or glutaminyl-tRNA synthetases. The reaction takes place in the presence of glutamine and ATP through an activated phospho-Asp-tRNA(Asn) or phospho-Glu-tRNA(Gln). This Synechococcus sp. (strain WH7803) protein is Aspartyl/glutamyl-tRNA(Asn/Gln) amidotransferase subunit B.